Consider the following 118-residue polypeptide: Transcriptional regulator WhiB4 (118 aa).

The 57-residue stretch at 36-92 (LCRTTDPDELFVRGAAQRKAAVICRHCPVMQECAADALDNKVEFGVWGGMTERQRRA) folds into the 4Fe-4S Wbl-type domain. Residues cysteine 37, cysteine 59, cysteine 62, and cysteine 68 each contribute to the [4Fe-4S] cluster site. 2 disulfide bridges follow: cysteine 37-cysteine 68 and cysteine 59-cysteine 62.

Belongs to the WhiB family. Requires [4Fe-4S] cluster as cofactor. In terms of processing, the Fe-S cluster can be nitrosylated by nitric oxide (NO). Upon Fe-S cluster removal intramolecular disulfide bonds are formed.

It is found in the cytoplasm. Functionally, acts as a transcriptional regulator. Probably redox-responsive. The apo- but not holo-form probably binds DNA. This Mycobacterium tuberculosis (strain CDC 1551 / Oshkosh) protein is Transcriptional regulator WhiB4 (whiB4).